The following is a 334-amino-acid chain: Aspartate carbamoyltransferase catalytic subunit (334 aa).

Carbamoyl phosphate is bound by residues R70 and T71. K98 provides a ligand contact to L-aspartate. Carbamoyl phosphate contacts are provided by R120, H150, and Q153. R183 and R239 together coordinate L-aspartate. Residues G280 and P281 each contribute to the carbamoyl phosphate site.

It belongs to the aspartate/ornithine carbamoyltransferase superfamily. ATCase family. In terms of assembly, heterododecamer (2C3:3R2) of six catalytic PyrB chains organized as two trimers (C3), and six regulatory PyrI chains organized as three dimers (R2).

The enzyme catalyses carbamoyl phosphate + L-aspartate = N-carbamoyl-L-aspartate + phosphate + H(+). It participates in pyrimidine metabolism; UMP biosynthesis via de novo pathway; (S)-dihydroorotate from bicarbonate: step 2/3. Its function is as follows. Catalyzes the condensation of carbamoyl phosphate and aspartate to form carbamoyl aspartate and inorganic phosphate, the committed step in the de novo pyrimidine nucleotide biosynthesis pathway. The polypeptide is Aspartate carbamoyltransferase catalytic subunit (Pseudomonas paraeruginosa (strain DSM 24068 / PA7) (Pseudomonas aeruginosa (strain PA7))).